A 107-amino-acid polypeptide reads, in one-letter code: Serine palmitoyltransferase-regulating protein TSC3 (107 aa).

A helical membrane pass occupies residues 72 to 92; sequence VFFLVVFTLSLFGLLKWVLSL.

The protein resides in the endoplasmic reticulum membrane. Its function is as follows. Stimulates the activity of serine palmitoyltransferase (SPT). The protein is Serine palmitoyltransferase-regulating protein TSC3 (TSC3) of Eremothecium gossypii (strain ATCC 10895 / CBS 109.51 / FGSC 9923 / NRRL Y-1056) (Yeast).